The following is a 586-amino-acid chain: Arrestin-related trafficking adapter 5 (586 aa).

2 disordered regions span residues glycine 123–threonine 145 and glutamate 182–arginine 217. Residues alanine 126–threonine 145 are compositionally biased toward polar residues. The span at serine 199 to asparagine 216 shows a compositional bias: low complexity. Residue lysine 364 forms a Glycyl lysine isopeptide (Lys-Gly) (interchain with G-Cter in ubiquitin) linkage.

The protein belongs to the arrestin family. As to quaternary structure, interacts with RSP5. Ubiquitinated by RSP5.

In terms of biological role, may regulate endocytosis by recruiting RSP5 ubiquitin ligase activity to specific plasma membrane proteins in response to extracellular stimuli. The sequence is that of Arrestin-related trafficking adapter 5 (ART5) from Saccharomyces cerevisiae (strain ATCC 204508 / S288c) (Baker's yeast).